The chain runs to 289 residues: UPF0276 protein BP2925 (289 aa).

Belongs to the UPF0276 family.

The chain is UPF0276 protein BP2925 from Bordetella pertussis (strain Tohama I / ATCC BAA-589 / NCTC 13251).